Reading from the N-terminus, the 48-residue chain is Small polypeptide DEVIL 14 (48 aa).

Residues 4–23 (TVVLRCCTSVTKVRTWKRCS) form a helical membrane-spanning segment. The tract at residues 17–48 (RTWKRCSKQIKEQRARLYIIWKCAVFLLSSHD) is required for DVL/RTFL small polypeptide activity.

Belongs to the DVL/RTFL small polypeptides family.

Its subcellular location is the cell membrane. In terms of biological role, small polypeptide acting as a regulatory molecule which coordinates cellular responses required for differentiation, growth and development, probably by restricting polar cell proliferation in lateral organs and coordinating socket cell recruitment and differentiation at trichome sites. The polypeptide is Small polypeptide DEVIL 14 (Arabidopsis thaliana (Mouse-ear cress)).